The chain runs to 59 residues: MNSVSTQLILVLASLLLILPVVEAVEAGDAIALLLGVVLSITGICACLGIYARKRNGQM.

The signal sequence occupies residues 1–24 (MNSVSTQLILVLASLLLILPVVEA). Over 25–29 (VEAGD) the chain is Extracellular. Residues 30 to 50 (AIALLLGVVLSITGICACLGI) form a helical membrane-spanning segment. Topologically, residues 51–59 (YARKRNGQM) are cytoplasmic.

As to quaternary structure, interacts (via transmembrane domain) with antiviral protein MAVS (via transmembrane domain); the interaction disrupts MAVS interaction with RIGI and inhibits MAVS aggregation, resulting in the repression of type I interferon signaling and innate immune responses.

Its subcellular location is the endoplasmic reticulum membrane. It is found in the mitochondrion membrane. In terms of biological role, negatively regulates antiviral innate immune responses. Disrupts the interaction of antiviral protein MAVS with innate immune receptor RIGI and inhibits MAVS aggregation, resulting in the repression of type I interferon signaling and innate immune responses. The chain is Small integral membrane protein 30 from Mus musculus (Mouse).